The chain runs to 812 residues: ISWI one complex protein 2 (812 aa).

Disordered stretches follow at residues 1-21 (MRTK…AGAA), 614-646 (MGNS…KRKP), 679-704 (AKQR…LEEL), and 762-812 (QTGS…PPTN). The segment covering 627-638 (PQSTLEPSTKSS) has biased composition (polar residues). Positions 673 to 714 (ELKIIRAKQRKQQEDRERRKKMKEEKKRLEELAKKRELTESV) form a coiled coil. Residues 683 to 704 (KQQEDRERRKKMKEEKKRLEEL) show a composition bias toward basic and acidic residues. The span at 769-796 (PQAPQAPQTSQASIQPQQQQQQQQQQQP) shows a compositional bias: low complexity.

Component of the ISW1B complex, which at least consists of ISW1, IOC2 and IOC4.

It localises to the nucleus. In terms of biological role, functions as a component of the ISW1B complex, which acts in remodeling the chromatin by catalyzing an ATP-dependent alteration in the structure of nucleosomal DNA. The ISW1B complex acts within coding regions to control the amount of RNA polymerase II released into productive elongation and to coordinate elongation with termination and pre-mRNA processing. This chain is ISWI one complex protein 2 (IOC2), found in Saccharomyces cerevisiae (strain ATCC 204508 / S288c) (Baker's yeast).